Here is a 152-residue protein sequence, read N- to C-terminus: D-aminoacyl-tRNA deacylase (152 aa).

The Gly-cisPro motif, important for rejection of L-amino acids signature appears at 142 to 143 (GP).

It belongs to the DTD family. As to quaternary structure, homodimer.

It localises to the cytoplasm. The enzyme catalyses glycyl-tRNA(Ala) + H2O = tRNA(Ala) + glycine + H(+). It catalyses the reaction a D-aminoacyl-tRNA + H2O = a tRNA + a D-alpha-amino acid + H(+). In terms of biological role, an aminoacyl-tRNA editing enzyme that deacylates mischarged D-aminoacyl-tRNAs. Also deacylates mischarged glycyl-tRNA(Ala), protecting cells against glycine mischarging by AlaRS. Acts via tRNA-based rather than protein-based catalysis; rejects L-amino acids rather than detecting D-amino acids in the active site. By recycling D-aminoacyl-tRNA to D-amino acids and free tRNA molecules, this enzyme counteracts the toxicity associated with the formation of D-aminoacyl-tRNA entities in vivo and helps enforce protein L-homochirality. The polypeptide is D-aminoacyl-tRNA deacylase (Paraburkholderia xenovorans (strain LB400)).